A 111-amino-acid chain; its full sequence is Cytochrome c6 (111 aa).

The N-terminal stretch at 1–25 (MKRLLSLIFLVFVFFAVMLTPPALA) is a signal peptide. Cys-39, Cys-42, His-43, and Met-83 together coordinate heme c.

The protein belongs to the cytochrome c family. PetJ subfamily. As to quaternary structure, monomer. In terms of processing, binds 1 heme c group covalently per subunit.

Its subcellular location is the cellular thylakoid lumen. In terms of biological role, functions as an electron carrier between membrane-bound cytochrome b6-f and photosystem I in oxygenic photosynthesis. This Rippkaea orientalis (strain PCC 8801 / RF-1) (Cyanothece sp. (strain PCC 8801)) protein is Cytochrome c6.